A 276-amino-acid chain; its full sequence is Putative translation initiation factor eIF-2B subunit 2-like (276 aa).

This sequence belongs to the eIF-2B alpha/beta/delta subunits family. In terms of assembly, complex of two different subunits.

Catalyzes the exchange of initiation factor 2-bound GDP for GTP. This is Putative translation initiation factor eIF-2B subunit 2-like from Pyrococcus horikoshii (strain ATCC 700860 / DSM 12428 / JCM 9974 / NBRC 100139 / OT-3).